The primary structure comprises 21 residues: ATGSGGMNLVFVGAEMAPXXX.

The protein belongs to the glycosyltransferase 1 family. Bacterial/plant glycogen synthase subfamily.

The protein resides in the plastid. It is found in the chloroplast. The protein localises to the amyloplast. The enzyme catalyses an NDP-alpha-D-glucose + [(1-&gt;4)-alpha-D-glucosyl](n) = [(1-&gt;4)-alpha-D-glucosyl](n+1) + a ribonucleoside 5'-diphosphate + H(+). The protein operates within glycan biosynthesis; starch biosynthesis. This Secale cereale (Rye) protein is Granule-bound starch synthase 1.